A 217-amino-acid polypeptide reads, in one-letter code: DNA-binding transcriptional activator DevR/DosR (217 aa).

In terms of domain architecture, Response regulatory spans 3 to 119 (KVFLVDDHEV…ELARAVKDVG (117 aa)). The residue at position 54 (aspartate 54) is a 4-aspartylphosphate. One can recognise an HTH luxR-type domain in the interval 143–208 (KQDPLSGLTD…QAAVFATELK (66 aa)). The segment at residues 167–186 (NKQIADRMFLAEKTVKNYVS) is a DNA-binding region (H-T-H motif). Phosphothreonine; by PknH is present on residues threonine 198 and threonine 205.

Homodimer. Interacts with NarL. Post-translationally, phosphorylated on Asp-54 by both DevS (DosS) and DosT. Phosphorylated on Thr-198 and Thr-205 by PknH, which enhances DevR dimerization. Aspartate phosphorylation and threonine phosphorylation cooperatively enhance DevR binding to DNA.

It is found in the cytoplasm. It localises to the host cytoplasmic vesicle. The protein localises to the host phagosome. Functionally, member of the two-component regulatory system DevR/DevS (also called DosR/DosS) involved in onset of the dormancy response. Regulates an approximately 48-member regulon. When phosphorylated binds and activates the promoter of DevR regulon genes in response to hypoxia. The presence of target DNA increases stability of phospho-DevR in vitro. Activates its own transcription under hypoxic but not aerobic conditions, probably binds as a dimer to tandem binding sites within the devR and hspX promoters. Accepts a phosphate group from DevS (DosS) and from DosT. Does not regulate transcription of dosT. This is DNA-binding transcriptional activator DevR/DosR from Mycobacterium tuberculosis (strain ATCC 25618 / H37Rv).